The sequence spans 451 residues: Tubulin gamma-1 chain (451 aa).

Ser131 is modified (phosphoserine; by BRSK1). 142–148 (AGGTGSG) contributes to the GTP binding site.

This sequence belongs to the tubulin family. As to quaternary structure, component of the gamma-tubulin ring complex (gTuRC) consisting of TUBGCP2, TUBGCP3, TUBGCP4, TUBGCP5 and TUBGCP6 and gamma-tubulin TUBG1 or TUBG2. TUBGCP2, TUBGCP3, TUBGCP4, TUBGCP5 and TUBGCP6 assemble in a 5:5:2:1:1 stoichiometry; each is associated with a gamma-tubulin, thereby arranging 14 gamma-tubulins in a helical manner. Gamma-tubulin at the first position is blocked by TUBGCP3 at the last position, allowing 13 protafilaments to grow into a microtubule. The gTuRC (via TUBGCP3 and TUBGCP6) interacts with ACTB and MZT1; the interactions form a luminal bridge that stabilizes the initial structure during complex assembly. The gTuRC (via TUBGCP2) interacts with MZT2A/MZT2B and CDK5RAP2 (via CM1 motif); the interactions play a role in gTuRC activation. Interacts with alpha-beta tubulin heterodimers; the interaction allows microtubules to nucleate from the gTuRC. Interacts with B9D2. Interacts with CDK5RAP2; the interaction is leading to centrosomal localization of TUBG1 and CDK5RAP2. Interacts with CIMAP3. Interacts with SAS6 and NUP62 at the centrosome. Interacts with EML3 (phosphorylated at 'Thr-881') and HAUS8. Interacts with DNM2; this interaction may participate in centrosome cohesion. Interacts with CCDC66. Phosphorylation at Ser-131 by BRSK1 regulates centrosome duplication, possibly by mediating relocation of gamma-tubulin and its associated proteins from the cytoplasm to the centrosome.

Its subcellular location is the cytoplasm. It localises to the cytoskeleton. It is found in the microtubule organizing center. The protein resides in the centrosome. The protein localises to the spindle. Tubulin is the major constituent of microtubules, protein filaments consisting of alpha- and beta-tubulin heterodimers. Gamma-tubulin is a key component of the gamma-tubulin ring complex (gTuRC) which mediates microtubule nucleation. The gTuRC regulates the minus-end nucleation of alpha-beta tubulin heterodimers that grow into microtubule protafilaments, a critical step in centrosome duplication and spindle formation. The protein is Tubulin gamma-1 chain of Canis lupus familiaris (Dog).